A 307-amino-acid polypeptide reads, in one-letter code: UDP-3-O-acyl-N-acetylglucosamine deacetylase (307 aa).

Zn(2+) contacts are provided by His-78, His-241, and Asp-245. Catalysis depends on His-268, which acts as the Proton donor.

It belongs to the LpxC family. Requires Zn(2+) as cofactor.

The catalysed reaction is a UDP-3-O-[(3R)-3-hydroxyacyl]-N-acetyl-alpha-D-glucosamine + H2O = a UDP-3-O-[(3R)-3-hydroxyacyl]-alpha-D-glucosamine + acetate. Its pathway is glycolipid biosynthesis; lipid IV(A) biosynthesis; lipid IV(A) from (3R)-3-hydroxytetradecanoyl-[acyl-carrier-protein] and UDP-N-acetyl-alpha-D-glucosamine: step 2/6. Its function is as follows. Catalyzes the hydrolysis of UDP-3-O-myristoyl-N-acetylglucosamine to form UDP-3-O-myristoylglucosamine and acetate, the committed step in lipid A biosynthesis. The chain is UDP-3-O-acyl-N-acetylglucosamine deacetylase from Variovorax paradoxus (strain S110).